We begin with the raw amino-acid sequence, 201 residues long: Inosine triphosphate pyrophosphatase (201 aa).

Position 16 to 21 (16 to 21) interacts with ITP; it reads TGNAKK. E44 contributes to the Mg(2+) binding site. ITP-binding positions include K56, 72 to 73, K89, 148 to 151, K171, and 176 to 177; these read DT, FGWD, and HR.

This sequence belongs to the HAM1 NTPase family. Homodimer. Mg(2+) serves as cofactor. Requires Mn(2+) as cofactor.

The protein localises to the cytoplasm. The catalysed reaction is ITP + H2O = IMP + diphosphate + H(+). The enzyme catalyses dITP + H2O = dIMP + diphosphate + H(+). It carries out the reaction XTP + H2O = XMP + diphosphate + H(+). Functionally, pyrophosphatase that hydrolyzes non-canonical purine nucleotides such as inosine triphosphate (ITP), deoxyinosine triphosphate (dITP) or xanthosine 5'-triphosphate (XTP) to their respective monophosphate derivatives. The enzyme does not distinguish between the deoxy- and ribose forms. Probably excludes non-canonical purines from RNA and DNA precursor pools, thus preventing their incorporation into RNA and DNA and avoiding chromosomal lesions. This is Inosine triphosphate pyrophosphatase from Zea mays (Maize).